The following is a 169-amino-acid chain: S-ribosylhomocysteine lyase (169 aa).

Residues histidine 54, histidine 58, and cysteine 128 each coordinate Fe cation.

The protein belongs to the LuxS family. In terms of assembly, homodimer. Requires Fe cation as cofactor.

The enzyme catalyses S-(5-deoxy-D-ribos-5-yl)-L-homocysteine = (S)-4,5-dihydroxypentane-2,3-dione + L-homocysteine. In terms of biological role, involved in the synthesis of autoinducer 2 (AI-2) which is secreted by bacteria and is used to communicate both the cell density and the metabolic potential of the environment. The regulation of gene expression in response to changes in cell density is called quorum sensing. Catalyzes the transformation of S-ribosylhomocysteine (RHC) to homocysteine (HC) and 4,5-dihydroxy-2,3-pentadione (DPD). This Shewanella putrefaciens (strain CN-32 / ATCC BAA-453) protein is S-ribosylhomocysteine lyase.